We begin with the raw amino-acid sequence, 196 residues long: ATP-dependent Clp protease proteolytic subunit (196 aa).

The active-site Nucleophile is the S98. H123 is an active-site residue.

It belongs to the peptidase S14 family. As to quaternary structure, fourteen ClpP subunits assemble into 2 heptameric rings which stack back to back to give a disk-like structure with a central cavity, resembling the structure of eukaryotic proteasomes.

Its subcellular location is the cytoplasm. The enzyme catalyses Hydrolysis of proteins to small peptides in the presence of ATP and magnesium. alpha-casein is the usual test substrate. In the absence of ATP, only oligopeptides shorter than five residues are hydrolyzed (such as succinyl-Leu-Tyr-|-NHMec, and Leu-Tyr-Leu-|-Tyr-Trp, in which cleavage of the -Tyr-|-Leu- and -Tyr-|-Trp bonds also occurs).. Functionally, cleaves peptides in various proteins in a process that requires ATP hydrolysis. Has a chymotrypsin-like activity. Plays a major role in the degradation of misfolded proteins. This Limosilactobacillus fermentum (strain NBRC 3956 / LMG 18251) (Lactobacillus fermentum) protein is ATP-dependent Clp protease proteolytic subunit.